Here is a 209-residue protein sequence, read N- to C-terminus: Thiamine-phosphate synthase (209 aa).

Residues 36–40 (QYRDK) and asparagine 68 each bind 4-amino-2-methyl-5-(diphosphooxymethyl)pyrimidine. Aspartate 69 and aspartate 87 together coordinate Mg(2+). Position 106 (threonine 106) interacts with 4-amino-2-methyl-5-(diphosphooxymethyl)pyrimidine. 133-135 (SST) is a binding site for 2-[(2R,5Z)-2-carboxy-4-methylthiazol-5(2H)-ylidene]ethyl phosphate. 4-amino-2-methyl-5-(diphosphooxymethyl)pyrimidine is bound at residue lysine 136. Glycine 163 lines the 2-[(2R,5Z)-2-carboxy-4-methylthiazol-5(2H)-ylidene]ethyl phosphate pocket.

This sequence belongs to the thiamine-phosphate synthase family. Mg(2+) is required as a cofactor.

The catalysed reaction is 2-[(2R,5Z)-2-carboxy-4-methylthiazol-5(2H)-ylidene]ethyl phosphate + 4-amino-2-methyl-5-(diphosphooxymethyl)pyrimidine + 2 H(+) = thiamine phosphate + CO2 + diphosphate. The enzyme catalyses 2-(2-carboxy-4-methylthiazol-5-yl)ethyl phosphate + 4-amino-2-methyl-5-(diphosphooxymethyl)pyrimidine + 2 H(+) = thiamine phosphate + CO2 + diphosphate. It carries out the reaction 4-methyl-5-(2-phosphooxyethyl)-thiazole + 4-amino-2-methyl-5-(diphosphooxymethyl)pyrimidine + H(+) = thiamine phosphate + diphosphate. It participates in cofactor biosynthesis; thiamine diphosphate biosynthesis; thiamine phosphate from 4-amino-2-methyl-5-diphosphomethylpyrimidine and 4-methyl-5-(2-phosphoethyl)-thiazole: step 1/1. Condenses 4-methyl-5-(beta-hydroxyethyl)thiazole monophosphate (THZ-P) and 2-methyl-4-amino-5-hydroxymethyl pyrimidine pyrophosphate (HMP-PP) to form thiamine monophosphate (TMP). The protein is Thiamine-phosphate synthase of Pseudomonas aeruginosa (strain UCBPP-PA14).